The sequence spans 103 residues: Cell division suppressor protein YneA (103 aa).

One can recognise a LysM domain in the interval 36–87 (VKIEVQEGDTLWELADRIKGGKTADKHKFIEWVADKNNLPTSVIKPGDVLIL).

This sequence belongs to the YneA family.

The protein resides in the cytoplasm. Inhibits cell division during the SOS response. Affects a later stage of the cell division protein assembly, after the assembly of the Z ring, by probably suppressing recruitment of FtsL and/or DivIC to the division machinery. This chain is Cell division suppressor protein YneA, found in Bacillus licheniformis (strain ATCC 14580 / DSM 13 / JCM 2505 / CCUG 7422 / NBRC 12200 / NCIMB 9375 / NCTC 10341 / NRRL NRS-1264 / Gibson 46).